Here is a 1268-residue protein sequence, read N- to C-terminus: uncharacterized protein (1268 aa).

Residues Lys191–Val206 show a composition bias toward low complexity. 2 disordered regions span residues Lys191–Lys235 and Asn253–Cys273. The span at Arg223 to Lys235 shows a compositional bias: basic and acidic residues. The CCHC-type zinc-finger motif lies at Pro239 to Ser256. In terms of domain architecture, Reverse transcriptase spans Glu465–Asp644. The region spanning Val844–Lys997 is the Integrase catalytic domain. The disordered stretch occupies residues Gly1092 to Arg1268. Polar residues-rich tracts occupy residues Val1127–Thr1143 and Gly1160–Val1169. Low complexity predominate over residues Pro1208–Thr1221. Residues Gln1222 to Ser1249 show a composition bias toward polar residues. Residues Thr1257–Arg1268 are compositionally biased toward basic and acidic residues.

This is an uncharacterized protein from Caenorhabditis elegans.